The primary structure comprises 234 residues: Hydrolase in agr operon (234 aa).

Residues 1 to 212 (ILYNKDTDVV…EKELTVTIDI (212 aa)) enclose the CN hydrolase domain. Glu-14 (proton acceptor) is an active-site residue. Lys-83 acts as the Proton donor in catalysis. Cys-119 functions as the Nucleophile in the catalytic mechanism.

This sequence belongs to the carbon-nitrogen hydrolase superfamily. NIT1/NIT2 family.

In Staphylococcus lugdunensis, this protein is Hydrolase in agr operon.